A 161-amino-acid polypeptide reads, in one-letter code: 3-isopropylmalate dehydratase small subunit (161 aa).

This sequence belongs to the LeuD family. LeuD type 2 subfamily. In terms of assembly, heterodimer of LeuC and LeuD.

The enzyme catalyses (2R,3S)-3-isopropylmalate = (2S)-2-isopropylmalate. It participates in amino-acid biosynthesis; L-leucine biosynthesis; L-leucine from 3-methyl-2-oxobutanoate: step 2/4. Its function is as follows. Catalyzes the isomerization between 2-isopropylmalate and 3-isopropylmalate, via the formation of 2-isopropylmaleate. The sequence is that of 3-isopropylmalate dehydratase small subunit from Metallosphaera sedula (strain ATCC 51363 / DSM 5348 / JCM 9185 / NBRC 15509 / TH2).